The primary structure comprises 133 residues: Secreted effector protein SteB (133 aa).

The protein localises to the secreted. It localises to the host cytoplasm. Effector proteins function to alter host cell physiology and promote bacterial survival in host tissues. This Salmonella typhimurium (strain 14028s / SGSC 2262) protein is Secreted effector protein SteB (steB).